The primary structure comprises 720 residues: Catalase-peroxidase (720 aa).

A signal peptide spans M1–A21. Positions W94 to Y222 form a cross-link, tryptophyl-tyrosyl-methioninium (Trp-Tyr) (with M-248). The active-site Proton acceptor is H95. Positions Y222–M248 form a cross-link, tryptophyl-tyrosyl-methioninium (Tyr-Met) (with W-94). A heme b-binding site is contributed by H263.

Belongs to the peroxidase family. Peroxidase/catalase subfamily. As to quaternary structure, homodimer or homotetramer. Requires heme b as cofactor. In terms of processing, formation of the three residue Trp-Tyr-Met cross-link is important for the catalase, but not the peroxidase activity of the enzyme.

It catalyses the reaction H2O2 + AH2 = A + 2 H2O. It carries out the reaction 2 H2O2 = O2 + 2 H2O. Functionally, bifunctional enzyme with both catalase and broad-spectrum peroxidase activity. The sequence is that of Catalase-peroxidase from Shewanella denitrificans (strain OS217 / ATCC BAA-1090 / DSM 15013).